Here is a 129-residue protein sequence, read N- to C-terminus: Cytochrome b5 (129 aa).

The Cytochrome b5 heme-binding domain occupies Thr-8–Lys-84. Residues His-43 and His-67 each contribute to the heme site. Residues Gly-104 to Tyr-124 traverse the membrane as a helical segment.

The protein belongs to the cytochrome b5 family.

Its subcellular location is the endoplasmic reticulum membrane. It localises to the microsome membrane. Its function is as follows. Membrane bound hemoprotein which function as an electron carrier for several membrane bound oxygenases. The sequence is that of Cytochrome b5 (Cytb5) from Candida tropicalis (Yeast).